Consider the following 444-residue polypeptide: MSSVLVRFAPSPTGRLHLGNARVAVLNWLFAHAHGGAMVLRLDDTDIARGTAEFAQAIRDDLLWLGLTWTREESQLARAARHAEAVDQLKAAGRLYACYETPEELEYRRRRQRAQGLPPIYDRAGLALSAAERAALEAEGRKPHWRFRLDHEETSWLDLARGPCHAHGGHLSDPVLVREDGSLLYTLPSVVDDIDFAISHVIRGEDHVVNTAVQIQICRALGAEPPHYAHLPLVLTAEGGGLSKRDNALSLGDLRAQGIEPAAINALLAALGTAEAPDPLKSLDELAQGFRLDAFGRAAPRLDPADLVRLSARIYHALSPSEARARGIAVSDALWLALRANLTTLSDLDELLPVVEGEITPLIAEEDRAMIDEAARLLPETPWDATTWATWTAAVKTATGRKGKGLFMPLRRALTGVDHGPELAALLPLIGRDKALARLRGEKA.

The 'HIGH' region signature appears at 10-20 (PSPTGRLHLGN). The 'KMSKS' region motif lies at 241 to 245 (GLSKR). Lys-244 is an ATP binding site.

The protein belongs to the class-I aminoacyl-tRNA synthetase family. Glutamate--tRNA ligase type 1 subfamily. Monomer.

The protein resides in the cytoplasm. It carries out the reaction tRNA(Glu) + L-glutamate + ATP = L-glutamyl-tRNA(Glu) + AMP + diphosphate. Its function is as follows. Catalyzes the attachment of glutamate to tRNA(Glu) in a two-step reaction: glutamate is first activated by ATP to form Glu-AMP and then transferred to the acceptor end of tRNA(Glu). This chain is Glutamate--tRNA ligase 1, found in Rhodospirillum rubrum (strain ATCC 11170 / ATH 1.1.1 / DSM 467 / LMG 4362 / NCIMB 8255 / S1).